The following is a 312-amino-acid chain: Formate dehydrogenase iron-sulfur subunit (312 aa).

4Fe-4S ferredoxin-type domains are found at residues 35 to 65 (IAKL…SDIN), 97 to 129 (LEWL…QYAN), 130 to 159 (GIVD…MNPE), and 164 to 195 (YKCT…FGSK). Positions 44, 47, 50, 54, 106, 109, 114, 118, 139, 142, 145, 149, 166, 169, 181, and 185 each coordinate [4Fe-4S] cluster.

Formate dehydrogenase is a membrane-bound complex, formed by subunits alpha, beta and gamma. [4Fe-4S] cluster is required as a cofactor.

The protein localises to the cell membrane. Its function is as follows. Allows to use formate as major electron donor during aerobic respiration. The beta chain is an electron transfer unit containing 4 cysteine clusters involved in the formation of iron-sulfur centers. Electrons are transferred from the gamma chain to the molybdenum cofactor of the alpha subunit. In Haemophilus influenzae (strain ATCC 51907 / DSM 11121 / KW20 / Rd), this protein is Formate dehydrogenase iron-sulfur subunit (fdxH).